Consider the following 341-residue polypeptide: S-adenosylmethionine:tRNA ribosyltransferase-isomerase (341 aa).

This sequence belongs to the QueA family. In terms of assembly, monomer.

Its subcellular location is the cytoplasm. It carries out the reaction 7-aminomethyl-7-carbaguanosine(34) in tRNA + S-adenosyl-L-methionine = epoxyqueuosine(34) in tRNA + adenine + L-methionine + 2 H(+). Its pathway is tRNA modification; tRNA-queuosine biosynthesis. In terms of biological role, transfers and isomerizes the ribose moiety from AdoMet to the 7-aminomethyl group of 7-deazaguanine (preQ1-tRNA) to give epoxyqueuosine (oQ-tRNA). The chain is S-adenosylmethionine:tRNA ribosyltransferase-isomerase from Chlorobium chlorochromatii (strain CaD3).